Reading from the N-terminus, the 71-residue chain is SPbeta prophage-derived uncharacterized protein YopF (71 aa).

The polypeptide is SPbeta prophage-derived uncharacterized protein YopF (yopF) (Bacillus subtilis (strain 168)).